Reading from the N-terminus, the 459-residue chain is Chromosomal replication initiator protein DnaA (459 aa).

The tract at residues 1-74 (MMEMPIDNLW…ANVVQSILGH (74 aa)) is domain I, interacts with DnaA modulators. The domain II stretch occupies residues 74 to 117 (HPVEIYITVAKGEEFEEIGGGGEWELPTTNIINETPNQNRQPNT). The domain III, AAA+ region stretch occupies residues 118–334 (ELNAKYVFSR…GALTRALAYI (217 aa)). 4 residues coordinate ATP: Gly-162, Gly-164, Lys-165, and Thr-166. The tract at residues 335-459 (SIWGLPMTVA…IKMNSRSRKP (125 aa)) is domain IV, binds dsDNA.

It belongs to the DnaA family. Oligomerizes as a right-handed, spiral filament on DNA at oriC.

It is found in the cytoplasm. Its function is as follows. Plays an essential role in the initiation and regulation of chromosomal replication. ATP-DnaA binds to the origin of replication (oriC) to initiate formation of the DNA replication initiation complex once per cell cycle. Binds the DnaA box (a 9 base pair repeat at the origin) and separates the double-stranded (ds)DNA. Forms a right-handed helical filament on oriC DNA; dsDNA binds to the exterior of the filament while single-stranded (ss)DNA is stabiized in the filament's interior. The ATP-DnaA-oriC complex binds and stabilizes one strand of the AT-rich DNA unwinding element (DUE), permitting loading of DNA polymerase. After initiation quickly degrades to an ADP-DnaA complex that is not apt for DNA replication. Binds acidic phospholipids. The polypeptide is Chromosomal replication initiator protein DnaA (Nostoc sp. (strain PCC 7120 / SAG 25.82 / UTEX 2576)).